Consider the following 185-residue polypeptide: Putative manganese efflux pump MntP (185 aa).

6 consecutive transmembrane segments (helical) span residues Leu8–Leu28, Ile42–Phe62, Ile66–Leu86, Met103–Leu123, Ile137–Leu157, and Lys165–Met185.

This sequence belongs to the MntP (TC 9.B.29) family.

It localises to the cell membrane. Its function is as follows. Probably functions as a manganese efflux pump. This Clostridium novyi (strain NT) protein is Putative manganese efflux pump MntP.